The chain runs to 63 residues: Large ribosomal subunit protein uL30 (63 aa).

It belongs to the universal ribosomal protein uL30 family. In terms of assembly, part of the 50S ribosomal subunit.

This Rickettsia akari (strain Hartford) protein is Large ribosomal subunit protein uL30.